The sequence spans 356 residues: Alanine racemase, catabolic (356 aa).

The active-site Proton acceptor; specific for D-alanine is the K35. Residue K35 is modified to N6-(pyridoxal phosphate)lysine. Position 130 (R130) interacts with substrate. Residue Y253 is the Proton acceptor; specific for L-alanine of the active site. M301 serves as a coordination point for substrate.

Belongs to the alanine racemase family. Monomer. It depends on pyridoxal 5'-phosphate as a cofactor.

The enzyme catalyses L-alanine = D-alanine. Its activity is regulated as follows. Inactivated by D- and L-beta-fluoroalanine, D- and L-beta-chloroalanine, and O-acetyl-D-serine. In terms of biological role, isomerizes L-alanine to D-alanine which is then oxidized to pyruvate by DadA. This chain is Alanine racemase, catabolic (dadX), found in Salmonella typhimurium (strain LT2 / SGSC1412 / ATCC 700720).